Here is a 185-residue protein sequence, read N- to C-terminus: Large ribosomal subunit protein bL25 (185 aa).

This sequence belongs to the bacterial ribosomal protein bL25 family. CTC subfamily. In terms of assembly, part of the 50S ribosomal subunit; part of the 5S rRNA/L5/L18/L25 subcomplex. Contacts the 5S rRNA. Binds to the 5S rRNA independently of L5 and L18.

Its function is as follows. This is one of the proteins that binds to the 5S RNA in the ribosome where it forms part of the central protuberance. The polypeptide is Large ribosomal subunit protein bL25 (Chlamydia trachomatis serovar L2 (strain ATCC VR-902B / DSM 19102 / 434/Bu)).